Here is a 389-residue protein sequence, read N- to C-terminus: Phospho-N-acetylmuramoyl-pentapeptide-transferase (389 aa).

10 helical membrane-spanning segments follow: residues 25–45 (RAVM…PWVI), 74–94 (MGGV…CDWG), 97–117 (FIWV…VDDY), 134–154 (FFWQ…SVSE), 190–210 (ISYP…IVGS), 222–242 (GLVI…AYVM), 259–279 (AGEL…FLWF), 286–306 (VFMG…VAVI), 311–331 (IVLF…MAQV), and 366–386 (QVTV…LSTL).

It belongs to the glycosyltransferase 4 family. MraY subfamily. The cofactor is Mg(2+).

The protein resides in the cell inner membrane. It carries out the reaction UDP-N-acetyl-alpha-D-muramoyl-L-alanyl-gamma-D-glutamyl-meso-2,6-diaminopimeloyl-D-alanyl-D-alanine + di-trans,octa-cis-undecaprenyl phosphate = di-trans,octa-cis-undecaprenyl diphospho-N-acetyl-alpha-D-muramoyl-L-alanyl-D-glutamyl-meso-2,6-diaminopimeloyl-D-alanyl-D-alanine + UMP. Its pathway is cell wall biogenesis; peptidoglycan biosynthesis. Functionally, catalyzes the initial step of the lipid cycle reactions in the biosynthesis of the cell wall peptidoglycan: transfers peptidoglycan precursor phospho-MurNAc-pentapeptide from UDP-MurNAc-pentapeptide onto the lipid carrier undecaprenyl phosphate, yielding undecaprenyl-pyrophosphoryl-MurNAc-pentapeptide, known as lipid I. This Cupriavidus necator (strain ATCC 17699 / DSM 428 / KCTC 22496 / NCIMB 10442 / H16 / Stanier 337) (Ralstonia eutropha) protein is Phospho-N-acetylmuramoyl-pentapeptide-transferase.